The primary structure comprises 65 residues: Sarcoplasmic/endoplasmic reticulum calcium ATPase regulator ARLN (65 aa).

The residue at position 1 (Met1) is an N-acetylmethionine. The interval 1–38 (MEVGQAASGTDGVRERRGSSAARRRSQDEPVQSGMNGI) is disordered. A phosphoserine mark is found at Ser19 and Ser26. Residues 44 to 64 (WLDLWLFILFDLALFIFVYLL) form a helical membrane-spanning segment.

In terms of assembly, homooligomer. Can also form heterooligomers with other sarcoplasmic/endoplasmic reticulum calcium ATPase (SERCA) regulators ERLN, PLN, SLN and STRIT1/DWORF. Monomer. Interacts as a monomer with ATP2A2/SERCA2; the interaction results in inhibition of ATP2A2 Ca(2+) affinity.

The protein localises to the endoplasmic reticulum membrane. In terms of biological role, inhibits the activity of the calcium ATPases ATP2A2/SERCA2 and ATP2A3/SERCA3 by decreasing their apparent affinity for Ca(2+). This is Sarcoplasmic/endoplasmic reticulum calcium ATPase regulator ARLN (Arln) from Rattus norvegicus (Rat).